The following is a 220-amino-acid chain: Deoxyribose-phosphate aldolase (220 aa).

The active-site Proton donor/acceptor is the Asp-89. Catalysis depends on Lys-151, which acts as the Schiff-base intermediate with acetaldehyde. The Proton donor/acceptor role is filled by Lys-180.

Belongs to the DeoC/FbaB aldolase family. DeoC type 1 subfamily. Homotetramer, in solution and in the crystal structure.

The protein localises to the cytoplasm. It catalyses the reaction 2-deoxy-D-ribose 5-phosphate = D-glyceraldehyde 3-phosphate + acetaldehyde. Its pathway is carbohydrate degradation; 2-deoxy-D-ribose 1-phosphate degradation; D-glyceraldehyde 3-phosphate and acetaldehyde from 2-deoxy-alpha-D-ribose 1-phosphate: step 2/2. Catalyzes a reversible aldol reaction between acetaldehyde and D-glyceraldehyde 3-phosphate to generate 2-deoxy-D-ribose 5-phosphate. The sequence is that of Deoxyribose-phosphate aldolase from Thermus thermophilus (strain ATCC 27634 / DSM 579 / HB8).